A 452-amino-acid chain; its full sequence is Putative purine permease CPE0397 (452 aa).

12 consecutive transmembrane segments (helical) span residues 34–54 (IFAA…SLGF), 58–78 (VTTA…IIQA), 83–103 (KVGA…SPAI), 108–128 (VLGL…EVIL), 138–158 (FFPP…LLPV), 172–192 (YASL…LLLN), 201–221 (SASI…LGLV), 250–270 (MAFI…LKAI), 326–346 (AVMA…AAII), 348–368 (GIPN…VAAA), 383–403 (LLII…PDVI), and 412–432 (MIFS…NAVL).

It belongs to the nucleobase:cation symporter-2 (NCS2) (TC 2.A.40) family.

It is found in the cell membrane. The polypeptide is Putative purine permease CPE0397 (cpx) (Clostridium perfringens (strain 13 / Type A)).